We begin with the raw amino-acid sequence, 547 residues long: MARFIFITGGVVSSLGKGLASAALGALLQARGFSVRLRKLDPYLNVDPGTMSPFEHGEVFVTDDGAETDLDLGHYERFTGVPASKTDSISSGRIYTNVLEKERRGDYLGKTIQVIPHVTNEIKDFINIGEDDVDFMLCEIGGTVGDIEGLPFFEAIRQFSQDKARGQCIFMHLTLLPFIKASGELKTKPTQHSVKELRSIGLAPDILVCRSEGPIPEKEREKLALFCNVRPDSVIAAQDLSSIYTAPLAYHREGLDQAVLDAFGITPAPKPNLSIWEDVADRINNPEGVVKVAIVGKYTQLEDAYKSIAEALTHGGMANRVKVEIEWVDAETFEREDPAPHLQGFHAILVPGGFGERGTEGKIKAAEFARTRKVPYLGICLGMQMAVIEAARNLAQLDDAGSEEFDHEAGKKRFTPVVYHLKEWVQGNHKVERKVGDDKGGTMRLGAYDAVLTEGSRVAEAYGTTAIEERHRHRYEVDTKYRDALEEKGLIFSGMSPDGALPEIVEVKDHPWFIGVQFHPELKSKPFEPHPLFRDFVRAAKENSRLV.

The amidoligase domain stretch occupies residues 1–265; sequence MARFIFITGG…DQAVLDAFGI (265 aa). CTP is bound at residue serine 13. UTP is bound at residue serine 13. ATP-binding positions include 14–19 and aspartate 71; that span reads SLGKGL. Residues aspartate 71 and glutamate 139 each coordinate Mg(2+). Residues 146-148, 186-191, and lysine 222 contribute to the CTP site; these read DIE and KTKPTQ. UTP contacts are provided by residues 186–191 and lysine 222; that span reads KTKPTQ. In terms of domain architecture, Glutamine amidotransferase type-1 spans 291–546; it reads KVAIVGKYTQ…VRAAKENSRL (256 aa). Glycine 353 contributes to the L-glutamine binding site. The active-site Nucleophile; for glutamine hydrolysis is the cysteine 380. Residues 381 to 384, glutamate 404, and arginine 474 each bind L-glutamine; that span reads LGMQ. Residues histidine 519 and glutamate 521 contribute to the active site.

The protein belongs to the CTP synthase family. As to quaternary structure, homotetramer.

The catalysed reaction is UTP + L-glutamine + ATP + H2O = CTP + L-glutamate + ADP + phosphate + 2 H(+). It catalyses the reaction L-glutamine + H2O = L-glutamate + NH4(+). It carries out the reaction UTP + NH4(+) + ATP = CTP + ADP + phosphate + 2 H(+). It participates in pyrimidine metabolism; CTP biosynthesis via de novo pathway; CTP from UDP: step 2/2. With respect to regulation, allosterically activated by GTP, when glutamine is the substrate; GTP has no effect on the reaction when ammonia is the substrate. The allosteric effector GTP functions by stabilizing the protein conformation that binds the tetrahedral intermediate(s) formed during glutamine hydrolysis. Inhibited by the product CTP, via allosteric rather than competitive inhibition. Functionally, catalyzes the ATP-dependent amination of UTP to CTP with either L-glutamine or ammonia as the source of nitrogen. Regulates intracellular CTP levels through interactions with the four ribonucleotide triphosphates. In Jannaschia sp. (strain CCS1), this protein is CTP synthase.